Reading from the N-terminus, the 313-residue chain is Platelet glycoprotein VI (313 aa).

A signal peptide spans 1–21 (MSPASPTFFCIGLCVLQVIQT). Topologically, residues 22–265 (QSGPLPKPSL…FGFAHQHYAK (244 aa)) are extracellular. Ig-like C2-type domains lie at 27–105 (PKPS…DQLE) and 115–197 (PSLS…APSD). Cys-49 and Cys-89 form a disulfide bridge. Asn-93 carries an N-linked (GlcNAc...) asparagine glycan. Cys-135 and Cys-181 form a disulfide bridge. Residues 213–236 (VPTEESFPVTESSRRPSILPTNKI) form a disordered region. N-linked (GlcNAc...) asparagine glycosylation occurs at Asn-244. A helical membrane pass occupies residues 266–286 (GNLVRICLGATIIIILLGLLA). Topologically, residues 287–313 (EDWHSRKKCLQHRMRALQRPLPPLPLA) are cytoplasmic.

Associated with Fc receptor gamma chain. The GPVI:FcRgamma complex is associated with the Src kinase family FYN and LYN. Interacts with TRAF4. Interacts with COL1A1, but not with COL4A4. In terms of tissue distribution, megakaryocytes and platelets.

It localises to the cell membrane. Collagen receptor involved in collagen-induced platelet adhesion and activation. Plays a key role in platelet procoagulant activity and subsequent thrombin and fibrin formation. This procoagulant function may contribute to arterial and venous thrombus formation. The signaling pathway involves the FcR gamma-chain, the Src kinases (likely FYN or LYN) and SYK, the adapter protein LAT and leads to the activation of PLCG2. This Mus musculus (Mouse) protein is Platelet glycoprotein VI.